Reading from the N-terminus, the 340-residue chain is Fructose-1,6-bisphosphatase class 1 (340 aa).

Positions 107, 126, 128, and 129 each coordinate Mg(2+). Substrate is bound at residue N215. E287 lines the Mg(2+) pocket.

It belongs to the FBPase class 1 family. In terms of assembly, homotetramer. Mg(2+) serves as cofactor.

Its subcellular location is the cytoplasm. The enzyme catalyses beta-D-fructose 1,6-bisphosphate + H2O = beta-D-fructose 6-phosphate + phosphate. It participates in carbohydrate biosynthesis; gluconeogenesis. The polypeptide is Fructose-1,6-bisphosphatase class 1 (Brucella anthropi (strain ATCC 49188 / DSM 6882 / CCUG 24695 / JCM 21032 / LMG 3331 / NBRC 15819 / NCTC 12168 / Alc 37) (Ochrobactrum anthropi)).